A 338-amino-acid chain; its full sequence is Extracellular globin (338 aa).

An N-terminal signal peptide occupies residues 1 to 18 (MRSLLLLSIVFFVVTVSA). A glycan (N-linked (GlcNAc...) asparagine) is linked at asparagine 19. Globin domains are found at residues 25–167 (CMKS…KHGR) and 174–316 (CMRS…RHGK). Heme b is bound by residues glutamine 82 and histidine 114. Residue asparagine 216 is glycosylated (N-linked (GlcNAc...) asparagine). Residues glutamine 231 and histidine 263 each contribute to the heme b site. Residues 313–338 (RHGKEHHEHKEEHKEEHKEEHKEEQH) are disordered.

It belongs to the globin family. In terms of assembly, homooctamer.

The protein localises to the secreted. Its subcellular location is the extracellular space. Functionally, has an extremely high oxygen affinity. In a vacuum, it takes several minutes to release its oxygen compared to milliseconds for a normal globin. Could be used as an oxygen scavenger for sterol biosynthesis. The sequence is that of Extracellular globin from Ascaris suum (Pig roundworm).